The sequence spans 1384 residues: Enhancer of mRNA-decapping protein 4 (1384 aa).

WD repeat units follow at residues 171-211 (GFTG…SKIQ), 227-274 (NSNR…SNNS), 292-331 (GHAARISEGALSPDGTVLATASHDGYVKFWQIYIEGQDQP), and 340-390 (HNGQ…CLQT). Disordered stretches follow at residues 471–494 (TEVLPPEEESESMTAEGNQGTSES), 551–584 (AMSSDKESGDSGSQNDLSKILPLPSPADFMSPAP), and 796–931 (AGAA…MSTE). Polar residues predominate over residues 482-494 (SMTAEGNQGTSES). Over residues 834-844 (CSREEIKDRHI) the composition is skewed to basic and acidic residues. 2 stretches are compositionally biased toward polar residues: residues 854-866 (HLTQNDSQDASAE) and 918-931 (SSQSRQIESQMSTE). Residues 930–1012 (TEVQDELLQM…QQLQDQLVQQ (83 aa)) are a coiled coil.

It belongs to the WD repeat EDC4 family.

Its subcellular location is the cytoplasm. The protein resides in the P-body. It is found in the nucleus. In terms of biological role, in the process of mRNA degradation, seems to play a role in mRNA decapping. This is Enhancer of mRNA-decapping protein 4 (edc4) from Danio rerio (Zebrafish).